The chain runs to 732 residues: Lanosterol synthase (732 aa).

Residue Thr-2 is modified to N-acetylthreonine. PFTB repeat units follow at residues 77-121 (ALNG…PLPA), 124-165 (REEI…RILG), 424-468 (PDNP…LLLQ), 483-528 (LCDA…MIDY), 560-600 (LTQG…ACMG), 612-653 (VSRA…HNTC), and 670-712 (QERG…NIFP). The active-site Proton donor is the Asp-455.

It belongs to the terpene cyclase/mutase family. As to quaternary structure, monomer. Widely expressed. Expressed in the hair bulb, the outer root sheath and hair matrix of the hair follicle epithelium. Also detected in dermal papilla, epidermis, sweat glands, sebaceous glands, and blood vessels.

The protein resides in the endoplasmic reticulum membrane. It carries out the reaction (S)-2,3-epoxysqualene = lanosterol. The protein operates within terpene metabolism; lanosterol biosynthesis; lanosterol from farnesyl diphosphate: step 3/3. Key enzyme in the cholesterol biosynthesis pathway. Catalyzes the cyclization of (S)-2,3 oxidosqualene to lanosterol, a reaction that forms the sterol nucleus. Through the production of lanosterol may regulate lens protein aggregation and increase transparency. In Homo sapiens (Human), this protein is Lanosterol synthase (LSS).